The chain runs to 203 residues: UPF0637 protein Sca_0732 (203 aa).

The protein belongs to the UPF0637 family.

This is UPF0637 protein Sca_0732 from Staphylococcus carnosus (strain TM300).